A 647-amino-acid chain; its full sequence is Putative ankyrin repeat protein L764 (647 aa).

ANK repeat units lie at residues 123-154, 202-231, 233-256, 258-284, 289-319, 348-377, 401-431, 529-558, and 588-617; these read LKDR…QINL, LTQE…EYDL, EIIN…SLNE, NVNI…TINS, SMFS…DLTV, DCNL…DLKK, NDVN…NIDL, FILK…DNNE, and NGQN…DVKN.

The polypeptide is Putative ankyrin repeat protein L764 (Acanthamoeba polyphaga (Amoeba)).